The chain runs to 245 residues: Adenosylcobinamide-GDP ribazoletransferase (245 aa).

Transmembrane regions (helical) follow at residues 31–51, 61–81, 113–133, 138–158, and 192–212; these read FGRA…VLYG, PLLQ…ALHL, AAVV…AALL, PGLL…LFLT, and LAFG…FAWL.

It belongs to the CobS family. Mg(2+) is required as a cofactor.

It is found in the cell inner membrane. It catalyses the reaction alpha-ribazole + adenosylcob(III)inamide-GDP = adenosylcob(III)alamin + GMP + H(+). The enzyme catalyses alpha-ribazole 5'-phosphate + adenosylcob(III)inamide-GDP = adenosylcob(III)alamin 5'-phosphate + GMP + H(+). The protein operates within cofactor biosynthesis; adenosylcobalamin biosynthesis; adenosylcobalamin from cob(II)yrinate a,c-diamide: step 7/7. In terms of biological role, joins adenosylcobinamide-GDP and alpha-ribazole to generate adenosylcobalamin (Ado-cobalamin). Also synthesizes adenosylcobalamin 5'-phosphate from adenosylcobinamide-GDP and alpha-ribazole 5'-phosphate. The polypeptide is Adenosylcobinamide-GDP ribazoletransferase (Pseudomonas paraeruginosa (strain DSM 24068 / PA7) (Pseudomonas aeruginosa (strain PA7))).